A 119-amino-acid chain; its full sequence is Ribonuclease P protein component (119 aa).

It belongs to the RnpA family. As to quaternary structure, consists of a catalytic RNA component (M1 or rnpB) and a protein subunit.

It carries out the reaction Endonucleolytic cleavage of RNA, removing 5'-extranucleotides from tRNA precursor.. In terms of biological role, RNaseP catalyzes the removal of the 5'-leader sequence from pre-tRNA to produce the mature 5'-terminus. It can also cleave other RNA substrates such as 4.5S RNA. The protein component plays an auxiliary but essential role in vivo by binding to the 5'-leader sequence and broadening the substrate specificity of the ribozyme. The sequence is that of Ribonuclease P protein component from Corynebacterium diphtheriae (strain ATCC 700971 / NCTC 13129 / Biotype gravis).